Here is a 60-residue protein sequence, read N- to C-terminus: UPF0434 protein CKO_02153 (60 aa).

This sequence belongs to the UPF0434 family.

The protein is UPF0434 protein CKO_02153 of Citrobacter koseri (strain ATCC BAA-895 / CDC 4225-83 / SGSC4696).